A 108-amino-acid polypeptide reads, in one-letter code: Nucleoid-associated protein GWCH70_0020 (108 aa).

The tract at residues 1–34 is disordered; that stretch reads MMRGGMGNMQKMMKQMQKMQKEMQKAQEQLAEKT. Over residues 9 to 18 the composition is skewed to low complexity; the sequence is MQKMMKQMQK. A compositionally biased stretch (basic and acidic residues) spans 19 to 34; it reads MQKEMQKAQEQLAEKT.

It belongs to the YbaB/EbfC family. As to quaternary structure, homodimer.

The protein resides in the cytoplasm. It localises to the nucleoid. Its function is as follows. Binds to DNA and alters its conformation. May be involved in regulation of gene expression, nucleoid organization and DNA protection. The protein is Nucleoid-associated protein GWCH70_0020 of Geobacillus sp. (strain WCH70).